The chain runs to 179 residues: Ribulose bisphosphate carboxylase small subunit, chloroplastic 2 (179 aa).

Residues 1 to 58 (MASSATMLSSVATAACVAPAQASMVAPFVGLKSASAFPVTQKTVTGLSTLPSNGGRVQ) constitute a chloroplast transit peptide.

Belongs to the RuBisCO small chain family. In terms of assembly, heterohexadecamer of 8 large and 8 small subunits.

The protein localises to the plastid. It localises to the chloroplast. In terms of biological role, ruBisCO catalyzes two reactions: the carboxylation of D-ribulose 1,5-bisphosphate, the primary event in carbon dioxide fixation, as well as the oxidative fragmentation of the pentose substrate. Both reactions occur simultaneously and in competition at the same active site. Although the small subunit is not catalytic it is essential for maximal activity. The protein is Ribulose bisphosphate carboxylase small subunit, chloroplastic 2 of Fritillaria agrestis (Stinkbells).